A 75-amino-acid chain; its full sequence is Exodeoxyribonuclease 7 small subunit (75 aa).

This sequence belongs to the XseB family. As to quaternary structure, heterooligomer composed of large and small subunits.

Its subcellular location is the cytoplasm. It catalyses the reaction Exonucleolytic cleavage in either 5'- to 3'- or 3'- to 5'-direction to yield nucleoside 5'-phosphates.. In terms of biological role, bidirectionally degrades single-stranded DNA into large acid-insoluble oligonucleotides, which are then degraded further into small acid-soluble oligonucleotides. The chain is Exodeoxyribonuclease 7 small subunit from Listeria innocua serovar 6a (strain ATCC BAA-680 / CLIP 11262).